A 155-amino-acid chain; its full sequence is MSKVTERVEAICQPVVESLGFELVDVEYVKEGPDYYLRIAIDKPGGIDISDCALASEKISEVMDKEDPITEAYFLDVSSPGAERPLKKEKDYENAIGKHVYVKLYEPVEGDKEWIGELKEVSKDTITLSAKIKTRTKVIEIDRKRIAKIRLAVIL.

Belongs to the RimP family.

The protein resides in the cytoplasm. Functionally, required for maturation of 30S ribosomal subunits. The chain is Ribosome maturation factor RimP from Macrococcus caseolyticus (strain JCSC5402) (Macrococcoides caseolyticum).